A 363-amino-acid polypeptide reads, in one-letter code: MSAIYNFCAGPAMLPAAVMKKAQQELLDWNGLGVSVMEVSHRGKEFIALTKQAEADLRELMHIPQNYHVLFMHGGGRGQFSAVVNNFLGNQGRALYLVSGQWSSAALAEAQKLAGDAQIDSLNIVEKQNGLNAVVLPDLHKIDADYRYVHYCPNETVDGIEIFDELDSPWPIVADLSSTIMSREIDVSRYGLIYAGAQKNIGPSGLSIVIVRDDMLKLPSLTQSSIMDYRLAVEHDSMFNTPPTFAWYLAAEVFAWLKSLGGVASIAKINQQKAQMLYACIDANPFYKNGVVAANRSQMNVTFQLADESLDGAFLKEAEAASLVALKGHRIVGGMRASLYNAMPLEGVAALVSFMNEFAAKHS.

Arg42 lines the L-glutamate pocket. Residues Gly76–Arg77, Trp102, Thr156, Asp175, and Gln198 contribute to the pyridoxal 5'-phosphate site. Lys199 is modified (N6-(pyridoxal phosphate)lysine). Position 240–241 (Asn240–Thr241) interacts with pyridoxal 5'-phosphate.

Belongs to the class-V pyridoxal-phosphate-dependent aminotransferase family. SerC subfamily. In terms of assembly, homodimer. Pyridoxal 5'-phosphate is required as a cofactor.

The protein resides in the cytoplasm. It carries out the reaction O-phospho-L-serine + 2-oxoglutarate = 3-phosphooxypyruvate + L-glutamate. It catalyses the reaction 4-(phosphooxy)-L-threonine + 2-oxoglutarate = (R)-3-hydroxy-2-oxo-4-phosphooxybutanoate + L-glutamate. Its pathway is amino-acid biosynthesis; L-serine biosynthesis; L-serine from 3-phospho-D-glycerate: step 2/3. It participates in cofactor biosynthesis; pyridoxine 5'-phosphate biosynthesis; pyridoxine 5'-phosphate from D-erythrose 4-phosphate: step 3/5. In terms of biological role, catalyzes the reversible conversion of 3-phosphohydroxypyruvate to phosphoserine and of 3-hydroxy-2-oxo-4-phosphonooxybutanoate to phosphohydroxythreonine. This is Phosphoserine aminotransferase from Shewanella sp. (strain MR-7).